Reading from the N-terminus, the 1076-residue chain is GPI inositol-deacylase A (1076 aa).

Residues 3–23 (IATFPALAITALALVLWATVA) traverse the membrane as a helical segment. N-linked (GlcNAc...) asparagine glycans are attached at residues Asn48 and Asn119. Ser240 is a catalytic residue. Asn404 is a glycosylation site (N-linked (GlcNAc...) asparagine). Transmembrane regions (helical) follow at residues 765-785 (FLGFYRVMFAIFPMFVFLCLL) and 815-835 (WILAGSCAIPFVPHVLVSLLY). Residue Asn849 is glycosylated (N-linked (GlcNAc...) asparagine). 3 helical membrane-spanning segments follow: residues 855-875 (FLGPVSLVIATGIVVVLHWLL), 877-897 (ILTLWVCQCYYMLGLAPIAPE), and 910-930 (FLLLLVFKIVPHQFAFMVAVL). N-linked (GlcNAc...) asparagine glycosylation is found at Asn952 and Asn966. A run of 3 helical transmembrane segments spans residues 970 to 990 (SLLLLLVLLLPINAPTLVVWL), 1006 to 1026 (EVSAILPILLLVLTASRGIMI), and 1035 to 1055 (IYATFAFLAYFALFVLFHGVV).

Belongs to the GPI inositol-deacylase family.

It is found in the endoplasmic reticulum membrane. Its function is as follows. Involved in inositol deacylation of GPI-anchored proteins which plays important roles in the quality control and ER-associated degradation of GPI-anchored proteins. In Yarrowia lipolytica (strain CLIB 122 / E 150) (Yeast), this protein is GPI inositol-deacylase A (BST1A).